A 434-amino-acid polypeptide reads, in one-letter code: GTPase Obg (434 aa).

The 159-residue stretch at 1-159 (MQFIDRCQIK…KTVRLELKYL (159 aa)) folds into the Obg domain. One can recognise an OBG-type G domain in the interval 160–329 (ANVGIVGYPN…LVDRVFDLYQ (170 aa)). GTP-binding positions include 166–173 (GYPNAGKS), 191–195 (FTTLV), 212–215 (DIPG), 282–285 (NKMD), and 310–312 (ISA). 2 residues coordinate Mg(2+): S173 and T193. Residues 356-434 (EKTIDDDPLD…ICDYEYLIDE (79 aa)) enclose the OCT domain.

It belongs to the TRAFAC class OBG-HflX-like GTPase superfamily. OBG GTPase family. In terms of assembly, monomer. The cofactor is Mg(2+).

It is found in the cytoplasm. An essential GTPase which binds GTP, GDP and possibly (p)ppGpp with moderate affinity, with high nucleotide exchange rates and a fairly low GTP hydrolysis rate. Plays a role in control of the cell cycle, stress response, ribosome biogenesis and in those bacteria that undergo differentiation, in morphogenesis control. This chain is GTPase Obg, found in Mycoplasmoides gallisepticum (strain R(low / passage 15 / clone 2)) (Mycoplasma gallisepticum).